Here is a 423-residue protein sequence, read N- to C-terminus: GPI mannosyltransferase 2 (423 aa).

Helical transmembrane passes span 7–27 (LTLI…ILSG), 102–122 (VILG…LVLY), 128–148 (IFNP…PTAT), 151–171 (APYT…LLSI), 191–211 (TGIF…AHIF), 228–248 (FLSA…TETV), 298–318 (LAMP…SHLV), 333–353 (PPPI…LLLF), and 400–420 (YWIG…AGHY).

It belongs to the PIGV family.

It is found in the endoplasmic reticulum membrane. The protein operates within glycolipid biosynthesis; glycosylphosphatidylinositol-anchor biosynthesis. Its function is as follows. Mannosyltransferase involved in glycosylphosphatidylinositol-anchor biosynthesis. Transfers the second mannose to the glycosylphosphatidylinositol during GPI precursor assembly. The sequence is that of GPI mannosyltransferase 2 (GPI18) from Cryptococcus neoformans var. neoformans serotype D (strain JEC21 / ATCC MYA-565) (Filobasidiella neoformans).